Consider the following 344-residue polypeptide: Phenylalanine--tRNA ligase alpha subunit (344 aa).

Residue Glu-256 participates in Mg(2+) binding.

The protein belongs to the class-II aminoacyl-tRNA synthetase family. Phe-tRNA synthetase alpha subunit type 1 subfamily. In terms of assembly, tetramer of two alpha and two beta subunits. It depends on Mg(2+) as a cofactor.

The protein resides in the cytoplasm. The catalysed reaction is tRNA(Phe) + L-phenylalanine + ATP = L-phenylalanyl-tRNA(Phe) + AMP + diphosphate + H(+). The protein is Phenylalanine--tRNA ligase alpha subunit of Bacillus mycoides (strain KBAB4) (Bacillus weihenstephanensis).